The sequence spans 226 residues: DNA mismatch repair protein MutH (226 aa).

This sequence belongs to the MutH family.

Its subcellular location is the cytoplasm. Sequence-specific endonuclease that cleaves unmethylated GATC sequences. It is involved in DNA mismatch repair. The chain is DNA mismatch repair protein MutH from Haemophilus ducreyi (strain 35000HP / ATCC 700724).